The following is a 601-amino-acid chain: Elongation factor 4 (601 aa).

In terms of domain architecture, tr-type G spans 5-187; the sequence is EHIRNFSIIA…AIVERLPAPE (183 aa). GTP is bound by residues 17 to 22 and 134 to 137; these read DHGKST and NKID.

This sequence belongs to the TRAFAC class translation factor GTPase superfamily. Classic translation factor GTPase family. LepA subfamily.

The protein resides in the cell inner membrane. It carries out the reaction GTP + H2O = GDP + phosphate + H(+). Functionally, required for accurate and efficient protein synthesis under certain stress conditions. May act as a fidelity factor of the translation reaction, by catalyzing a one-codon backward translocation of tRNAs on improperly translocated ribosomes. Back-translocation proceeds from a post-translocation (POST) complex to a pre-translocation (PRE) complex, thus giving elongation factor G a second chance to translocate the tRNAs correctly. Binds to ribosomes in a GTP-dependent manner. This chain is Elongation factor 4, found in Nitratidesulfovibrio vulgaris (strain ATCC 29579 / DSM 644 / CCUG 34227 / NCIMB 8303 / VKM B-1760 / Hildenborough) (Desulfovibrio vulgaris).